Consider the following 229-residue polypeptide: Putative N-acetylmannosamine-6-phosphate 2-epimerase (229 aa).

It belongs to the NanE family.

It carries out the reaction an N-acyl-D-glucosamine 6-phosphate = an N-acyl-D-mannosamine 6-phosphate. It functions in the pathway amino-sugar metabolism; N-acetylneuraminate degradation; D-fructose 6-phosphate from N-acetylneuraminate: step 3/5. Converts N-acetylmannosamine-6-phosphate (ManNAc-6-P) to N-acetylglucosamine-6-phosphate (GlcNAc-6-P). This Escherichia coli O8 (strain IAI1) protein is Putative N-acetylmannosamine-6-phosphate 2-epimerase.